The following is a 934-amino-acid chain: uncharacterized protein (934 aa).

Residues 1–24 form the signal peptide; that stretch reads MKLKKRYLLLGSTLTVSAALILSA. Residue Cys25 is the site of N-palmitoyl cysteine attachment. Cys25 is lipidated: S-diacylglycerol cysteine. The tract at residues 111 to 131 is disordered; that stretch reads SGLKGRAQKNGSTDSSDGSSK. Positions 119-131 are enriched in polar residues; the sequence is KNGSTDSSDGSSK.

Its subcellular location is the cell membrane. This is an uncharacterized protein from Mycoplasma genitalium (strain ATCC 33530 / DSM 19775 / NCTC 10195 / G37) (Mycoplasmoides genitalium).